A 150-amino-acid polypeptide reads, in one-letter code: Sulfur-rich protein, serovar D (150 aa).

2 helical membrane passes run 41-61 (VGLV…LVSA) and 67-87 (AIYL…VGIL).

It is found in the membrane. This chain is Sulfur-rich protein, serovar D (srp), found in Chlamydia trachomatis serovar D (strain ATCC VR-885 / DSM 19411 / UW-3/Cx).